The sequence spans 848 residues: MCPEQPHDTRAERDEMSEQTQQAAQPAETAAYDVRAIQDKWLPVWERLDPFRADDSSPREKKYALTMFPYPSGDLHMGHAEVTALHDVVARYWWQRGYEVLNPMGWDSFGLPAENAAIRNDEHPATYTYANIETQYESFKRYAVSFDWSRRLHTSDPEYYRWTQWLFLKFRERGLAYRKSSPVNWCPNDQTVLANEQVVDGRCERCGAEVTKRELTQWYFKITDYAQELLDRLDDLEPTWPARVVTAQRNWIGRSEGAHVDFVVDGRDEPITVYTTRPDTIFGTTFMVVAVDSPLAAELVTDAQRPAFEAYREEIRKETEIERLSTDRPKTGVDLGVTATNPVTGTQIPVWATDYVLADYGTGAVMGVPGGDQRDWEFATEMGLDIVRTTQTPEGFDGEAYHGEGPAINSPAPGADAPLDINGLPVDEAKRATIEFLEQQGTGAGAVNFRLRDWLLSRQRYWGVPIPIIHCDACGEVAVPYDQLPLELPELRGADLKPKGVSPLAAAEEWVNVACPECGGAATRDSDTMDTFVDSSWYFLRYCSPDYTEGPFDVEKAKAWMPADIYVGGVEHAVLHLLYARFFTKVLRDMGMLEVDEPFAAQLNQGIVINQGKKMSKSLGNGVSLGDQLAEFGVDAVRVTLVFAGPPEDDIDWADVSPAGALRFLQRAWRLSGDVTSEAGTPAAGGDVALRRVTARTVHDAAELIESYRFNVMVARVMELVNATRKAIDGAPGPADPAVREATETVAILLSLVAPYVAEEMWERLGHEPTVARVGWPEVDPALLVEEQVTAVVQIQGKVRARLEVAPDISEADLEQLAMADPAVVRAIDGRPVRKVIVRAPKLVNVVV.

A compositionally biased stretch (basic and acidic residues) spans 1–16 (MCPEQPHDTRAERDEM). A disordered region spans residues 1–30 (MCPEQPHDTRAERDEMSEQTQQAAQPAETA). A compositionally biased stretch (low complexity) spans 18 to 30 (EQTQQAAQPAETA). Positions 69-79 (PYPSGDLHMGH) match the 'HIGH' region motif. A 'KMSKS' region motif is present at residues 614–618 (KMSKS). Lys617 is a binding site for ATP.

The protein belongs to the class-I aminoacyl-tRNA synthetase family.

It is found in the cytoplasm. The catalysed reaction is tRNA(Leu) + L-leucine + ATP = L-leucyl-tRNA(Leu) + AMP + diphosphate. The protein is Leucine--tRNA ligase of Nocardioides sp. (strain ATCC BAA-499 / JS614).